A 180-amino-acid polypeptide reads, in one-letter code: Large ribosomal subunit protein uL6 (180 aa).

This sequence belongs to the universal ribosomal protein uL6 family. Part of the 50S ribosomal subunit.

Its function is as follows. This protein binds to the 23S rRNA, and is important in its secondary structure. It is located near the subunit interface in the base of the L7/L12 stalk, and near the tRNA binding site of the peptidyltransferase center. The sequence is that of Large ribosomal subunit protein uL6 from Mesoplasma florum (strain ATCC 33453 / NBRC 100688 / NCTC 11704 / L1) (Acholeplasma florum).